Here is a 202-residue protein sequence, read N- to C-terminus: Dephospho-CoA kinase (202 aa).

Positions 4–201 (VVALTGGIAS…QKYLAMSRQN (198 aa)) constitute a DPCK domain. ATP is bound at residue 12–17 (ASGKTT).

It belongs to the CoaE family.

Its subcellular location is the cytoplasm. The enzyme catalyses 3'-dephospho-CoA + ATP = ADP + CoA + H(+). Its pathway is cofactor biosynthesis; coenzyme A biosynthesis; CoA from (R)-pantothenate: step 5/5. In terms of biological role, catalyzes the phosphorylation of the 3'-hydroxyl group of dephosphocoenzyme A to form coenzyme A. In Vibrio cholerae serotype O1 (strain ATCC 39315 / El Tor Inaba N16961), this protein is Dephospho-CoA kinase.